Consider the following 109-residue polypeptide: Nucleoid-associated protein Ldb1634 (109 aa).

Residues Met18–Glu40 are disordered.

This sequence belongs to the YbaB/EbfC family. In terms of assembly, homodimer.

It localises to the cytoplasm. The protein resides in the nucleoid. In terms of biological role, binds to DNA and alters its conformation. May be involved in regulation of gene expression, nucleoid organization and DNA protection. The sequence is that of Nucleoid-associated protein Ldb1634 from Lactobacillus delbrueckii subsp. bulgaricus (strain ATCC 11842 / DSM 20081 / BCRC 10696 / JCM 1002 / NBRC 13953 / NCIMB 11778 / NCTC 12712 / WDCM 00102 / Lb 14).